A 381-amino-acid chain; its full sequence is uncharacterized protein (381 aa).

A helical transmembrane segment spans residues 3-23 (GAVAGLVFLAVLVIFAIIVVA).

The protein belongs to the band 7/mec-2 family.

It is found in the membrane. This is an uncharacterized protein from Mycobacterium bovis (strain ATCC BAA-935 / AF2122/97).